We begin with the raw amino-acid sequence, 406 residues long: MDGSHSAALKLQQLPPTSSSSAVSEASFSYKENLIGALLAIFGHLVVSIALNLQKYCHIRLAGSKDPRAYFKTKTWWLGLFLMLLGELGVFASYAFAPLSLIVPLSAVSVIASAIIGIIFIKEKWKPKDFLRRYVLSFVGCGLAVVGTYLLVTFAPNSHEKMTGENVTRHLVSWPFLLYMLVEIILFCLLLYFYKEKNANNIVVILLLVALLGSMTVVTVKAVAGMLVLSIQGNLQLDYPIFYVMFVCMVATAVYQAAFLSQASQMYDSSLIASVGYILSTTIAITAGAIFYLDFIGEDVLHICMFALGCLIAFLGVFLITRNRKKPIPFEPYISMDAMPGMQNMHDKGMTVQPELKASFSYGALENNDNISEIYAPATLPVMQEEHGSRSASGVPYRVLEHTKKE.

Helical transmembrane passes span asparagine 33–leucine 53, tryptophan 76–phenylalanine 96, leucine 101–isoleucine 121, and valine 135–alanine 155. Asparagine 166 carries an N-linked (GlcNAc...) asparagine glycan. 5 helical membrane-spanning segments follow: residues leucine 171–leucine 191, isoleucine 202–alanine 222, proline 240–leucine 260, leucine 271–phenylalanine 291, and valine 300–isoleucine 320. A Phosphoserine modification is found at serine 372.

Belongs to the NIPA family.

It localises to the membrane. The chain is NIPA-like protein 3 (NIPAL3) from Homo sapiens (Human).